Consider the following 356-residue polypeptide: MPRPISATIHTAALANNLSVVRRHAAQSKVWAIVKANAYGHGLARVFPGLRGTDGFGLLDLDEAVKLRELGWAGPILLLEGFFRSTDIDVIDRYSLTTAVHNDEQMRMLETARLSKPVNVQLKMNSGMNRLGYTPEKYRAAWERARACPGIGQITLMTHFSDADGERGVAEQMATFERGAQGIAGARSFANSAAVLWHPSAHFDWVRPGIMLYGASPSGRAADIADRGLKPTMTLASELIAVQTLAKGQAVGYGSMFVAEDTMRIGVVACGYADGYPRIAPEGTPVVVDGVRTRIVGRVSMDMLTVDLTPVPQAGVGARVELWGETLPIDDVAARCMTVGYELMCAVAPRVPVRAE.

The active-site Proton acceptor; specific for D-alanine is the Lys-35. At Lys-35 the chain carries N6-(pyridoxal phosphate)lysine. Arg-130 provides a ligand contact to substrate. Catalysis depends on Tyr-253, which acts as the Proton acceptor; specific for L-alanine. Residue Met-301 coordinates substrate.

The protein belongs to the alanine racemase family. It depends on pyridoxal 5'-phosphate as a cofactor.

It carries out the reaction L-alanine = D-alanine. The protein operates within amino-acid biosynthesis; D-alanine biosynthesis; D-alanine from L-alanine: step 1/1. Catalyzes the interconversion of L-alanine and D-alanine. May also act on other amino acids. The polypeptide is Alanine racemase (alr) (Burkholderia mallei (strain NCTC 10229)).